A 426-amino-acid polypeptide reads, in one-letter code: 3-phosphoshikimate 1-carboxyvinyltransferase (426 aa).

Residues Lys-22, Ser-23, and Arg-27 each contribute to the 3-phosphoshikimate site. Phosphoenolpyruvate is bound at residue Lys-22. Phosphoenolpyruvate contacts are provided by Gly-96 and Arg-124. Residues Ser-170, Ser-171, Gln-172, Ser-198, Asp-314, Asn-337, and Lys-341 each contribute to the 3-phosphoshikimate site. Phosphoenolpyruvate is bound at residue Gln-172. Asp-314 functions as the Proton acceptor in the catalytic mechanism. Positions 345, 387, and 412 each coordinate phosphoenolpyruvate.

The protein belongs to the EPSP synthase family. Monomer.

It is found in the cytoplasm. It carries out the reaction 3-phosphoshikimate + phosphoenolpyruvate = 5-O-(1-carboxyvinyl)-3-phosphoshikimate + phosphate. The protein operates within metabolic intermediate biosynthesis; chorismate biosynthesis; chorismate from D-erythrose 4-phosphate and phosphoenolpyruvate: step 6/7. Functionally, catalyzes the transfer of the enolpyruvyl moiety of phosphoenolpyruvate (PEP) to the 5-hydroxyl of shikimate-3-phosphate (S3P) to produce enolpyruvyl shikimate-3-phosphate and inorganic phosphate. The protein is 3-phosphoshikimate 1-carboxyvinyltransferase of Shewanella baltica (strain OS155 / ATCC BAA-1091).